The sequence spans 145 residues: D-aminoacyl-tRNA deacylase (145 aa).

The Gly-cisPro motif, important for rejection of L-amino acids signature appears at 137-138 (GP).

It belongs to the DTD family. Homodimer.

It localises to the cytoplasm. The catalysed reaction is glycyl-tRNA(Ala) + H2O = tRNA(Ala) + glycine + H(+). It catalyses the reaction a D-aminoacyl-tRNA + H2O = a tRNA + a D-alpha-amino acid + H(+). An aminoacyl-tRNA editing enzyme that deacylates mischarged D-aminoacyl-tRNAs. Also deacylates mischarged glycyl-tRNA(Ala), protecting cells against glycine mischarging by AlaRS. Acts via tRNA-based rather than protein-based catalysis; rejects L-amino acids rather than detecting D-amino acids in the active site. By recycling D-aminoacyl-tRNA to D-amino acids and free tRNA molecules, this enzyme counteracts the toxicity associated with the formation of D-aminoacyl-tRNA entities in vivo and helps enforce protein L-homochirality. The chain is D-aminoacyl-tRNA deacylase from Pseudomonas paraeruginosa (strain DSM 24068 / PA7) (Pseudomonas aeruginosa (strain PA7)).